Consider the following 892-residue polypeptide: Alanine--tRNA ligase (892 aa).

4 residues coordinate Zn(2+): His596, His600, Cys700, and His704.

The protein belongs to the class-II aminoacyl-tRNA synthetase family. Zn(2+) is required as a cofactor.

It localises to the cytoplasm. It carries out the reaction tRNA(Ala) + L-alanine + ATP = L-alanyl-tRNA(Ala) + AMP + diphosphate. Functionally, catalyzes the attachment of alanine to tRNA(Ala) in a two-step reaction: alanine is first activated by ATP to form Ala-AMP and then transferred to the acceptor end of tRNA(Ala). Also edits incorrectly charged Ser-tRNA(Ala) and Gly-tRNA(Ala) via its editing domain. The chain is Alanine--tRNA ligase from Methanococcus maripaludis (strain C7 / ATCC BAA-1331).